Reading from the N-terminus, the 700-residue chain is MAQEVLTDLNKVRNIGIMAHIDAGKTTTTERILFYTGVNYKIGETHDGASTTDWMEQEKERGITITSAAVTCFWNNNQINIIDTPGHVDFTVEVERSLRVLDGAVAVFDGKEGVEPQSEQVWRQAAKYDVPRICFVNKMDKMGADFYFTVQTIIDRLGAKPLVLQLPIGAEDDFDGVVDLVEMRAITWRGVVPTGALPTIEEIPADLVEKAAEYREKLLETVAESDEALMEKYFGGEELTVEEIKGAIRKMTVASELYPVICGSAFKNKGVQPMLDAVIDYLPNPLDIGEVVGHKLGDEEVEITRKPSKEEPFSALAFKIAAHPFFGKLTFVRVYSGRIDPGAQVLNATKGKKERIGKLFQMHANKENPVDEAVAGHIYAMIGLKDTTTGDTLCDQASPIVLESMSFPAPVIQVSIEPKTKSDQEKLGVAIQKLAEEDPTFSVELDEETGQTVIGGMGELHLDILVDRMRREFKVEANVGKPQVAYRETITKKVEKHDYTHKKQTGGSGQFAKVIIALEPFVGEDGATYEFENKVSGGRIPREYIPSVDAGAQDAMQYGVLAGYPLVNLKLSLLDGAYHDVDSSEMAFKVAGSQALKEAARKAGPVILEPLMAVEVTTPEEYMGDVIGDLNSRRGQIQAMEERSGARVVKALVPLSEMFGYIGDLRSKTQGRANFSMVFDSYAEVPANVSKEIIAKATGE.

Residues 10–286 (NKVRNIGIMA…AVIDYLPNPL (277 aa)) form the tr-type G domain. Residues 19–26 (AHIDAGKT), 83–87 (DTPGH), and 137–140 (NKMD) each bind GTP.

Belongs to the TRAFAC class translation factor GTPase superfamily. Classic translation factor GTPase family. EF-G/EF-2 subfamily.

It is found in the cytoplasm. Functionally, catalyzes the GTP-dependent ribosomal translocation step during translation elongation. During this step, the ribosome changes from the pre-translocational (PRE) to the post-translocational (POST) state as the newly formed A-site-bound peptidyl-tRNA and P-site-bound deacylated tRNA move to the P and E sites, respectively. Catalyzes the coordinated movement of the two tRNA molecules, the mRNA and conformational changes in the ribosome. The polypeptide is Elongation factor G (Rhodococcus erythropolis (strain PR4 / NBRC 100887)).